Reading from the N-terminus, the 878-residue chain is Probable di- and tripeptidase DUG2 (878 aa).

WD repeat units follow at residues 18–57 (NHAF…LIHT), 68–107 (HTRS…IRDD), 235–274 (RFNQ…GQNT), 282–322 (DKID…IIST), and 362–405 (PQQG…SAVP). His520 is a Zn(2+) binding site. Residue Asp522 is part of the active site. Asp553 contacts Zn(2+). Glu586 serves as the catalytic Proton acceptor. Glu587 lines the Zn(2+) pocket. The WD 6 repeat unit spans residues 608-651 (IDWILLSNSTWVDQEHPCLNYGLRGVINAQIKVWSDKPDGHSGL). Position 853 (His853) interacts with Zn(2+).

The protein belongs to the peptidase M20A family. As to quaternary structure, component of the GSH degradosomal complex composed of at least DUG1, DUG2 and DUG3. Zn(2+) is required as a cofactor.

It is found in the cytoplasm. It localises to the nucleus. Functionally, component of the GSH degradosomal complex involved in the degradation of glutathione (GSH) and other peptides containing a gamma-glu-X bond. This Saccharomyces cerevisiae (strain ATCC 204508 / S288c) (Baker's yeast) protein is Probable di- and tripeptidase DUG2 (DUG2).